The chain runs to 1222 residues: ATP-dependent helicase/nuclease subunit A (1222 aa).

A UvrD-like helicase ATP-binding domain is found at 39 to 495 (QKRTAQQIEA…ILLKENFRSQ (457 aa)). 60–67 (ASAGSGKT) contributes to the ATP binding site. One can recognise a UvrD-like helicase C-terminal domain in the interval 524-810 (QLIAGSHAQT…NLMTIHKSKG (287 aa)).

This sequence belongs to the helicase family. AddA subfamily. Heterodimer of AddA and AddB/RexB. Requires Mg(2+) as cofactor.

The catalysed reaction is Couples ATP hydrolysis with the unwinding of duplex DNA by translocating in the 3'-5' direction.. The enzyme catalyses ATP + H2O = ADP + phosphate + H(+). The heterodimer acts as both an ATP-dependent DNA helicase and an ATP-dependent, dual-direction single-stranded exonuclease. Recognizes the chi site generating a DNA molecule suitable for the initiation of homologous recombination. The AddA nuclease domain is required for chi fragment generation; this subunit has the helicase and 3' -&gt; 5' nuclease activities. The sequence is that of ATP-dependent helicase/nuclease subunit A from Streptococcus pyogenes serotype M18 (strain MGAS8232).